Consider the following 142-residue polypeptide: COMPASS component SHG1 (142 aa).

This sequence belongs to the SHG1 family. Component of the Set1C/COMPASS complex which consists of SET1(2), BRE2(2), SPP1(2), SDC1(1), SHG1(1), SWD1(1), SWD2(1), and SWD3(1).

Its subcellular location is the nucleus. The COMPASS (Set1C) complex specifically mono-, di- and trimethylates histone H3 to form H3K4me1/2/3, which subsequently plays a role in telomere length maintenance and transcription elongation regulation. This chain is COMPASS component SHG1 (SHG1), found in Saccharomyces cerevisiae (strain ATCC 204508 / S288c) (Baker's yeast).